Reading from the N-terminus, the 274-residue chain is Eukaryotic translation initiation factor 3 subunit G (274 aa).

The 79-residue stretch at 192 to 270 (TAIRISNLSN…LILNVEWSKP (79 aa)) folds into the RRM domain.

It belongs to the eIF-3 subunit G family. Component of the eukaryotic translation initiation factor 3 (eIF-3) complex.

Its subcellular location is the cytoplasm. Functionally, RNA-binding component of the eukaryotic translation initiation factor 3 (eIF-3) complex, which is involved in protein synthesis of a specialized repertoire of mRNAs and, together with other initiation factors, stimulates binding of mRNA and methionyl-tRNAi to the 40S ribosome. The eIF-3 complex specifically targets and initiates translation of a subset of mRNAs involved in cell proliferation. This subunit can bind 18S rRNA. The polypeptide is Eukaryotic translation initiation factor 3 subunit G (Bombyx mori (Silk moth)).